Here is a 466-residue protein sequence, read N- to C-terminus: Citrate synthase, mitochondrial (466 aa).

The transit peptide at 1–27 (MALLTAAARLLGTKNASCLVLAARHAS) directs the protein to the mitochondrion. The short motif at 2 to 21 (ALLTAAARLLGTKNASCLVL) is the SIFI-degron element. At K57 the chain carries N6-succinyllysine. K76 carries the N6-acetyllysine; alternate modification. K76 bears the N6-succinyllysine; alternate mark. N6-succinyllysine is present on residues K103 and K193. Residue H301 is part of the active site. N6-acetyllysine; alternate occurs at positions 321 and 327. K321 and K327 each carry N6-succinyllysine; alternate. H347 is a catalytic residue. R356 contributes to the oxaloacetate binding site. K375 is subject to N6-acetyllysine; alternate. K375 carries the post-translational modification N6-succinyllysine; alternate. K382 carries the post-translational modification N6-acetyllysine. At K393 the chain carries N6-acetyllysine; alternate. K393 carries the post-translational modification N6-succinyllysine; alternate. The residue at position 395 (K395) is an N6,N6,N6-trimethyllysine. The active site involves D402. Oxaloacetate-binding residues include R428 and R448. An N6-succinyllysine modification is found at K450. Position 459 is an N6-acetyllysine; alternate (K459). N6-succinyllysine; alternate is present on K459.

The protein belongs to the citrate synthase family. In terms of assembly, homodimer. Post-translationally, methylated. Trimethylation at Lys-395 by CSKMT decreases citrate synthase activity. In response to mitochondrial stress, the precursor protein is ubiquitinated by the SIFI complex in the cytoplasm before mitochondrial import, leading to its degradation. Within the SIFI complex, UBR4 initiates ubiquitin chain that are further elongated or branched by KCMF1.

The protein resides in the mitochondrion matrix. The enzyme catalyses oxaloacetate + acetyl-CoA + H2O = citrate + CoA + H(+). Its pathway is carbohydrate metabolism; tricarboxylic acid cycle; isocitrate from oxaloacetate: step 1/2. In terms of biological role, key enzyme of the Krebs tricarboxylic acid cycle which catalyzes the synthesis of citrate from acetyl coenzyme A and oxaloacetate. The polypeptide is Citrate synthase, mitochondrial (CS) (Homo sapiens (Human)).